Here is a 944-residue protein sequence, read N- to C-terminus: LPS-assembly protein LptD (944 aa).

The signal sequence occupies residues 1–33; sequence MALKSPAFRRKFPLLVTGGLLALQPLATSFVVA. The tract at residues 52–102 is disordered; sequence KATGNLPPRPVHPGAAAASSGAEAPGEVGEAQAEKPMLVTESKGRGLKSRS. The segment covering 64-82 has biased composition (low complexity); it reads PGAAAASSGAEAPGEVGEA.

It belongs to the LptD family. Component of the lipopolysaccharide transport and assembly complex. Interacts with LptE and LptA.

The protein resides in the cell outer membrane. Its function is as follows. Together with LptE, is involved in the assembly of lipopolysaccharide (LPS) at the surface of the outer membrane. This chain is LPS-assembly protein LptD, found in Pseudomonas entomophila (strain L48).